The sequence spans 201 residues: Cytochrome c oxidase assembly protein CtaG (201 aa).

The Cytoplasmic portion of the chain corresponds to 1–13 (MTDQGENEKKQRR). Residues 14–36 (SNATIAVACLSFFVCMIGAAYAS) form a helical; Signal-anchor for type II membrane protein membrane-spanning segment. The Periplasmic portion of the chain corresponds to 37 to 201 (VPLYRIFCQV…KAVGSTRNGG (165 aa)).

It belongs to the COX11/CtaG family.

It localises to the cell inner membrane. Exerts its effect at some terminal stage of cytochrome c oxidase synthesis, probably by being involved in the insertion of the copper B into subunit I. This chain is Cytochrome c oxidase assembly protein CtaG, found in Brucella suis (strain ATCC 23445 / NCTC 10510).